Here is an 88-residue protein sequence, read N- to C-terminus: uncharacterized protein (88 aa).

The protein localises to the host cytoplasm. This is an uncharacterized protein from Escherichia phage Mu (Bacteriophage Mu).